The primary structure comprises 350 residues: MEVRHNWTVAEVKALLDKPFMDLLFEAQQVHRLHHPHNHVQVSTLLSIKTGACPEDCKYCPQSAHYRTDVDKERLMEVERVLDAAQKAKNSGSTRFCMGAAWKNPKERDMPLLKEMIRGVKDMGLETCMTLGMLTPDQAQQLAQAGLDYYNHNLDTSPEFYGNIITTRTYQDRLDTLSHVRDAGMKICSGGIIGMGESTNDRAGLLVELANLPTHPESVPINMLVKVKGTPLEQVDDVEPFDFVRLIAVARIMMPKSAVRLSAGREKMNEQMQALCFMAGANSIFYGCKLLTTPNPAEDSDMLLFKKLGINREQVAQKPDEITENELLDRVVERVAARPTASDLFYDAAL.

Positions 38 to 256 (NHVQVSTLLS…IAVARIMMPK (219 aa)) constitute a Radical SAM core domain. Residues Cys-53, Cys-57, and Cys-60 each contribute to the [4Fe-4S] cluster site. Cys-97, Cys-128, Cys-188, and Arg-260 together coordinate [2Fe-2S] cluster.

This sequence belongs to the radical SAM superfamily. Biotin synthase family. Homodimer. The cofactor is [4Fe-4S] cluster. It depends on [2Fe-2S] cluster as a cofactor.

The catalysed reaction is (4R,5S)-dethiobiotin + (sulfur carrier)-SH + 2 reduced [2Fe-2S]-[ferredoxin] + 2 S-adenosyl-L-methionine = (sulfur carrier)-H + biotin + 2 5'-deoxyadenosine + 2 L-methionine + 2 oxidized [2Fe-2S]-[ferredoxin]. It participates in cofactor biosynthesis; biotin biosynthesis; biotin from 7,8-diaminononanoate: step 2/2. Catalyzes the conversion of dethiobiotin (DTB) to biotin by the insertion of a sulfur atom into dethiobiotin via a radical-based mechanism. This chain is Biotin synthase, found in Vibrio cholerae serotype O1 (strain ATCC 39541 / Classical Ogawa 395 / O395).